Here is a 313-residue protein sequence, read N- to C-terminus: Glyoxylate/hydroxypyruvate reductase A (313 aa).

Arg-228 is an active-site residue. His-276 functions as the Proton donor in the catalytic mechanism.

It belongs to the D-isomer specific 2-hydroxyacid dehydrogenase family. GhrA subfamily.

It is found in the cytoplasm. The enzyme catalyses glycolate + NADP(+) = glyoxylate + NADPH + H(+). The catalysed reaction is (R)-glycerate + NAD(+) = 3-hydroxypyruvate + NADH + H(+). It catalyses the reaction (R)-glycerate + NADP(+) = 3-hydroxypyruvate + NADPH + H(+). Its function is as follows. Catalyzes the NADPH-dependent reduction of glyoxylate and hydroxypyruvate into glycolate and glycerate, respectively. The sequence is that of Glyoxylate/hydroxypyruvate reductase A from Yersinia enterocolitica serotype O:8 / biotype 1B (strain NCTC 13174 / 8081).